The chain runs to 480 residues: Aspartyl/glutamyl-tRNA(Asn/Gln) amidotransferase subunit B (480 aa).

Belongs to the GatB/GatE family. GatB subfamily. As to quaternary structure, heterotrimer of A, B and C subunits.

The enzyme catalyses L-glutamyl-tRNA(Gln) + L-glutamine + ATP + H2O = L-glutaminyl-tRNA(Gln) + L-glutamate + ADP + phosphate + H(+). The catalysed reaction is L-aspartyl-tRNA(Asn) + L-glutamine + ATP + H2O = L-asparaginyl-tRNA(Asn) + L-glutamate + ADP + phosphate + 2 H(+). Its function is as follows. Allows the formation of correctly charged Asn-tRNA(Asn) or Gln-tRNA(Gln) through the transamidation of misacylated Asp-tRNA(Asn) or Glu-tRNA(Gln) in organisms which lack either or both of asparaginyl-tRNA or glutaminyl-tRNA synthetases. The reaction takes place in the presence of glutamine and ATP through an activated phospho-Asp-tRNA(Asn) or phospho-Glu-tRNA(Gln). The sequence is that of Aspartyl/glutamyl-tRNA(Asn/Gln) amidotransferase subunit B from Streptococcus pneumoniae (strain 70585).